The primary structure comprises 142 residues: Small ribosomal subunit protein uS19 (142 aa).

It belongs to the universal ribosomal protein uS19 family. Component of the small ribosomal subunit. Mature ribosomes consist of a small (40S) and a large (60S) subunit. The 40S subunit contains about 32 different proteins and 1 molecule of RNA (18S). The 60S subunit contains 45 different proteins and 3 molecules of RNA (25S, 5.8S and 5S).

It localises to the cytoplasm. Its function is as follows. Component of the ribosome, a large ribonucleoprotein complex responsible for the synthesis of proteins in the cell. The small ribosomal subunit (SSU) binds messenger RNAs (mRNAs) and translates the encoded message by selecting cognate aminoacyl-transfer RNA (tRNA) molecules. The large subunit (LSU) contains the ribosomal catalytic site termed the peptidyl transferase center (PTC), which catalyzes the formation of peptide bonds, thereby polymerizing the amino acids delivered by tRNAs into a polypeptide chain. The nascent polypeptides leave the ribosome through a tunnel in the LSU and interact with protein factors that function in enzymatic processing, targeting, and the membrane insertion of nascent chains at the exit of the ribosomal tunnel. RPS15 has a role in the late stage of the assembly of pre-40S particles within the nucleus and controls their export to the cytoplasm. The polypeptide is Small ribosomal subunit protein uS19 (RPS15) (Candida albicans (strain SC5314 / ATCC MYA-2876) (Yeast)).